The following is a 528-amino-acid chain: DnaJ homolog 1, mitochondrial (528 aa).

Residues 1–66 (MFSKYLQSRV…REFSRCAALK (66 aa)) constitute a mitochondrion transit peptide. The J domain maps to 86–150 (DPYKTLGVSK…KKKKAFDTYG (65 aa)). The segment at 227-308 (GAKKDLSYSV…CMGSGTVRER (82 aa)) adopts a CR-type zinc-finger fold. 4 CXXCXGXG motif repeats span residues 240-247 (CSSCHGSG), 257-264 (CFACKGTG), 280-287 (CDSCGGTG), and 296-303 (CRSCMGSG). The tract at residues 455–528 (NDSTARRTQS…QNPKKDESSS (74 aa)) is disordered. Residues 462 to 488 (TQSSPSGTNSSTSTSSTSSKHSTGIST) are compositionally biased toward low complexity. A compositionally biased stretch (basic and acidic residues) spans 513-528 (LHPDEDQNPKKDESSS).

It is found in the mitochondrion. The polypeptide is DnaJ homolog 1, mitochondrial (mdj1) (Schizosaccharomyces pombe (strain 972 / ATCC 24843) (Fission yeast)).